A 242-amino-acid chain; its full sequence is Caffeoyl-CoA O-methyltransferase (242 aa).

Substrate is bound at residue K16. S-adenosyl-L-methionine contacts are provided by residues T58, E80, 82-83 (GV), S88, D106, and A135. Substrate is bound at residue D158. D158 lines the a divalent metal cation pocket. D160 contributes to the S-adenosyl-L-methionine binding site. 2 residues coordinate a divalent metal cation: D184 and N185. Residue N189 coordinates substrate.

It belongs to the class I-like SAM-binding methyltransferase superfamily. Cation-dependent O-methyltransferase family. CCoAMT subfamily. Requires a divalent metal cation as cofactor.

The enzyme catalyses (E)-caffeoyl-CoA + S-adenosyl-L-methionine = (E)-feruloyl-CoA + S-adenosyl-L-homocysteine + H(+). It functions in the pathway aromatic compound metabolism; phenylpropanoid biosynthesis. Methylates caffeoyl-CoA to feruloyl-CoA and 5-hydroxyferuloyl-CoA to sinapoyl-CoA. Plays a role in the synthesis of feruloylated polysaccharides. Involved in the reinforcement of the plant cell wall. Also involved in the responding to wounding or pathogen challenge by the increased formation of cell wall-bound ferulic acid polymers. This chain is Caffeoyl-CoA O-methyltransferase (CCOAOMT), found in Solanum tuberosum (Potato).